The primary structure comprises 262 residues: Putative ankyrin repeat protein R848 (262 aa).

ANK repeat units lie at residues 8–37 (SNDY…NVTH), 38–67 (DNNY…DIRD), 68–97 (CRDY…NIRA), 99–127 (DDYA…NFRA), 128–157 (DNDY…DIRA), 159–187 (DDYA…DFRS), and 189–217 (NNAS…DVNT).

This chain is Putative ankyrin repeat protein R848, found in Acanthamoeba polyphaga (Amoeba).